Here is a 384-residue protein sequence, read N- to C-terminus: DNA replication and repair protein RecF (384 aa).

43–50 lines the ATP pocket; sequence GENGSGKT.

It belongs to the RecF family.

The protein localises to the cytoplasm. In terms of biological role, the RecF protein is involved in DNA metabolism; it is required for DNA replication and normal SOS inducibility. RecF binds preferentially to single-stranded, linear DNA. It also seems to bind ATP. This Brucella suis biovar 1 (strain 1330) protein is DNA replication and repair protein RecF.